The sequence spans 180 residues: Acireductone dioxygenase (180 aa).

Residues His97, His99, Glu103, and His141 each coordinate Fe(2+). Positions 97, 99, 103, and 141 each coordinate Ni(2+).

This sequence belongs to the acireductone dioxygenase (ARD) family. In terms of assembly, monomer. The cofactor is Fe(2+). Ni(2+) is required as a cofactor.

The enzyme catalyses 1,2-dihydroxy-5-(methylsulfanyl)pent-1-en-3-one + O2 = 3-(methylsulfanyl)propanoate + CO + formate + 2 H(+). It catalyses the reaction 1,2-dihydroxy-5-(methylsulfanyl)pent-1-en-3-one + O2 = 4-methylsulfanyl-2-oxobutanoate + formate + 2 H(+). It functions in the pathway amino-acid biosynthesis; L-methionine biosynthesis via salvage pathway; L-methionine from S-methyl-5-thio-alpha-D-ribose 1-phosphate: step 5/6. Functionally, catalyzes 2 different reactions between oxygen and the acireductone 1,2-dihydroxy-3-keto-5-methylthiopentene (DHK-MTPene) depending upon the metal bound in the active site. Fe-containing acireductone dioxygenase (Fe-ARD) produces formate and 2-keto-4-methylthiobutyrate (KMTB), the alpha-ketoacid precursor of methionine in the methionine recycle pathway. Ni-containing acireductone dioxygenase (Ni-ARD) produces methylthiopropionate, carbon monoxide and formate, and does not lie on the methionine recycle pathway. This chain is Acireductone dioxygenase, found in Acidiphilium cryptum (strain JF-5).